Consider the following 212-residue polypeptide: Phosphatidylserine decarboxylase proenzyme (212 aa).

Ser182 (schiff-base intermediate with substrate; via pyruvic acid) is an active-site residue. The residue at position 182 (Ser182) is a Pyruvic acid (Ser); by autocatalysis.

Belongs to the phosphatidylserine decarboxylase family. PSD-A subfamily. Heterodimer of a large membrane-associated beta subunit and a small pyruvoyl-containing alpha subunit. It depends on pyruvate as a cofactor. Post-translationally, is synthesized initially as an inactive proenzyme. Formation of the active enzyme involves a self-maturation process in which the active site pyruvoyl group is generated from an internal serine residue via an autocatalytic post-translational modification. Two non-identical subunits are generated from the proenzyme in this reaction, and the pyruvate is formed at the N-terminus of the alpha chain, which is derived from the carboxyl end of the proenzyme. The post-translation cleavage follows an unusual pathway, termed non-hydrolytic serinolysis, in which the side chain hydroxyl group of the serine supplies its oxygen atom to form the C-terminus of the beta chain, while the remainder of the serine residue undergoes an oxidative deamination to produce ammonia and the pyruvoyl prosthetic group on the alpha chain.

The protein resides in the cell membrane. It carries out the reaction a 1,2-diacyl-sn-glycero-3-phospho-L-serine + H(+) = a 1,2-diacyl-sn-glycero-3-phosphoethanolamine + CO2. The protein operates within phospholipid metabolism; phosphatidylethanolamine biosynthesis; phosphatidylethanolamine from CDP-diacylglycerol: step 2/2. Its function is as follows. Catalyzes the formation of phosphatidylethanolamine (PtdEtn) from phosphatidylserine (PtdSer). The polypeptide is Phosphatidylserine decarboxylase proenzyme (Paraburkholderia phytofirmans (strain DSM 17436 / LMG 22146 / PsJN) (Burkholderia phytofirmans)).